Consider the following 299-residue polypeptide: MRQIAFYGKGGIGKSTTSQNTLAGMAQNGNRIMIVGCDPKADSTRLILNTKAQVTVLHLAAERGAVEDLELEDVLLQGFADIKCVESGGPEPGVGCAGRGIITAINFLEEEGAYEDLDFVSYDVLGDVVCGGFAMPIREGKAQEIYIVTSGEMMAMYAANNIARGILKYAHTGGVRLGGLICNSRNVNRETDLIEELADRLNTQMIHFVPRSKQVQEAELRRMTVIQYSPDHPQADEYRTLAKKIEENTKLTIPTPIDNDTLEELLINYGLLGSEEEYKKVMEADMATQALTRATSINK.

Gly8–Ser15 provides a ligand contact to ATP. Cys96 provides a ligand contact to [4Fe-4S] cluster. Arg99 bears the ADP-ribosylarginine; by dinitrogenase reductase ADP-ribosyltransferase mark. Cys130 contacts [4Fe-4S] cluster.

The protein belongs to the NifH/BchL/ChlL family. Homodimer. [4Fe-4S] cluster is required as a cofactor. In terms of processing, the reversible ADP-ribosylation of Arg-99 inactivates the nitrogenase reductase and regulates nitrogenase activity.

It catalyses the reaction N2 + 8 reduced [2Fe-2S]-[ferredoxin] + 16 ATP + 16 H2O = H2 + 8 oxidized [2Fe-2S]-[ferredoxin] + 2 NH4(+) + 16 ADP + 16 phosphate + 6 H(+). Functionally, the key enzymatic reactions in nitrogen fixation are catalyzed by the nitrogenase complex, which has 2 components: the iron protein and the molybdenum-iron protein. This Gloeothece citriformis (strain PCC 7424) (Cyanothece sp. (strain PCC 7424)) protein is Nitrogenase iron protein.